The chain runs to 382 residues: Osmoprotectant import ATP-binding protein OsmV (382 aa).

The ABC transporter domain maps to 2–241 (IKLENLTKQF…PANEFVGSFV (240 aa)). 39 to 46 (GPSGCGKT) provides a ligand contact to ATP. CBS domains lie at 258 to 320 (VTDQ…THPF) and 322 to 373 (ITGK…GRTR).

It belongs to the ABC transporter superfamily. In terms of assembly, the complex is composed of two ATP-binding proteins (OsmV), two transmembrane proteins (OsmW and OsmY) and a solute-binding protein (OsmX).

Its subcellular location is the cell inner membrane. In terms of biological role, part of the OsmU ABC transporter complex, which is involved in the uptake of osmoprotectants such as choline-O-sulfate and glycine betaine. Probably responsible for energy coupling to the transport system. The polypeptide is Osmoprotectant import ATP-binding protein OsmV (osmV) (Salmonella typhimurium (strain LT2 / SGSC1412 / ATCC 700720)).